The sequence spans 55 residues: Large ribosomal subunit protein bL32c (55 aa).

Belongs to the bacterial ribosomal protein bL32 family.

Its subcellular location is the plastid. It is found in the chloroplast. The protein is Large ribosomal subunit protein bL32c of Nicotiana sylvestris (Wood tobacco).